Reading from the N-terminus, the 75-residue chain is MKSSMAILLVMALIIFTLDKNYSTAKDLPSCEKGIHRKVTCKQCNKRSDNDDDYTKCCNSFDAFLMCGFLLSKES.

The first 23 residues, 1 to 23, serve as a signal peptide directing secretion; that stretch reads MKSSMAILLVMALIIFTLDKNYS.

The protein belongs to the scoloptoxin-03 family. Post-translationally, contains 3 disulfide bonds. In terms of tissue distribution, expressed by the venom gland.

The protein resides in the secreted. Its function is as follows. Inhibits voltage-gated potassium channels. The protein is Kappa-scoloptoxin(03)-Ssm1e of Scolopendra mutilans (Chinese red-headed centipede).